A 63-amino-acid polypeptide reads, in one-letter code: Lantibiotic mutacin-1140 (63 aa).

A propeptide spanning residues Met-1–Arg-41 is cleaved from the precursor. Positions Ser-44–Cys-48 form a cross-link, lanthionine (Ser-Cys). Ser-46 carries the 2,3-didehydroalanine (Ser) modification. The segment at residues Thr-49 to Cys-52 is a cross-link (beta-methyllanthionine (Thr-Cys)). The residue at position 55 (Thr-55) is a 2,3-didehydrobutyrine. The segment at residues Ser-57–Cys-62 is a cross-link (lanthionine (Ser-Cys)). The segment at residues Ser-60 to Cys-63 is a cross-link (S-(2-aminovinyl)-D-cysteine (Ser-Cys)).

Belongs to the type A lantibiotic family. In terms of processing, maturation of lantibiotics involves the enzymatic conversion of Thr, and Ser into dehydrated AA and the formation of thioether bonds with cysteine. The C-terminal lanthionine undergoes decarboxylation. This is followed by membrane translocation and cleavage of the modified precursor. The structure of the 2,3-didehydrobutyrine is not discussed in PubMed:11082191.

Its function is as follows. Lanthionine-containing peptide antibiotic (lantibiotic) active on Gram-positive bacteria. The bactericidal activity of lantibiotics is based on depolarization of energized bacterial cytoplasmic membranes, initiated by the formation of aqueous transmembrane pores. This is Lantibiotic mutacin-1140 (lanA) from Streptococcus mutans.